A 102-amino-acid polypeptide reads, in one-letter code: Gastrin/cholecystokinin-like peptide (102 aa).

Positions 1–20 (MDKKVCVSILLAMLAIAALC) are cleaved as a signal peptide. Residues 21-45 (RPMTELESARHGAQRKNSISDVSRR) constitute a propeptide that is removed on maturation. Sulfotyrosine is present on Tyr86. Phenylalanine amide is present on Phe92. A propeptide spanning residues 96–102 (SSEVTES) is cleaved from the precursor.

It belongs to the gastrin/cholecystokinin family. In terms of tissue distribution, expressed in antrum, duodenum, colon, pancreas, brain and testis. No expression found in kidney, lung, liver, skin or distal two-thirds of small intestine. In the brain, strongly expressed in the pituitary gland with moderate expression in the neural lobe, brain stem and hypothalamus.

The protein localises to the secreted. Its function is as follows. May control digestion processes. The polypeptide is Gastrin/cholecystokinin-like peptide (GAST) (Aquarana catesbeiana (American bullfrog)).